The primary structure comprises 166 residues: MMYFIYLLSVMLVLSFMAFASNPSPIYGGLSLVLSGGVGCGIIVSLGGSFLGLIVFLVYLGGMLVVFGYTAAMATEEYPETWVDYTVVLNLAIMVGMLGVVWYEFFEEVDLGVGYDLLDLGGMEVLGGDFNGVSLLYACGGWELVFSGWILFLTIFVVLEVTRGEH.

Transmembrane regions (helical) follow at residues 1 to 21 (MMYF…AFAS), 26 to 46 (IYGG…IVSL), 47 to 67 (GGSF…LVVF), 86 to 106 (TVVL…YEFF), and 139 to 159 (CGGW…FVVL).

The protein belongs to the complex I subunit 6 family. Core subunit of respiratory chain NADH dehydrogenase (Complex I) which is composed of 45 different subunits.

The protein localises to the mitochondrion inner membrane. It carries out the reaction a ubiquinone + NADH + 5 H(+)(in) = a ubiquinol + NAD(+) + 4 H(+)(out). Its function is as follows. Core subunit of the mitochondrial membrane respiratory chain NADH dehydrogenase (Complex I) which catalyzes electron transfer from NADH through the respiratory chain, using ubiquinone as an electron acceptor. Essential for the catalytic activity and assembly of complex I. The polypeptide is NADH-ubiquinone oxidoreductase chain 6 (MT-ND6) (Tachyglossus aculeatus aculeatus (Southeast Australian short-beaked echidna)).